A 132-amino-acid polypeptide reads, in one-letter code: Small ribosomal subunit protein uS8 (132 aa).

It belongs to the universal ribosomal protein uS8 family. In terms of assembly, part of the 30S ribosomal subunit. Contacts proteins S5 and S12.

Functionally, one of the primary rRNA binding proteins, it binds directly to 16S rRNA central domain where it helps coordinate assembly of the platform of the 30S subunit. The sequence is that of Small ribosomal subunit protein uS8 from Rickettsia typhi (strain ATCC VR-144 / Wilmington).